A 151-amino-acid polypeptide reads, in one-letter code: Putative olfactory receptor 13C6 (151 aa).

At Met-1 to Thr-27 the chain is on the extracellular side. N-linked (GlcNAc...) asparagine glycosylation occurs at Asn-5. The helical transmembrane segment at Phe-28–Leu-48 threads the bilayer. At Met-49–Tyr-61 the chain is on the cytoplasmic side. A helical transmembrane segment spans residues Phe-62–Ile-82. Residues Leu-83–Val-100 lie on the Extracellular side of the membrane. The chain crosses the membrane as a helical span at residues Gln-101 to Phe-121.

It belongs to the G-protein coupled receptor 1 family.

The protein localises to the cell membrane. Its function is as follows. Odorant receptor. The chain is Putative olfactory receptor 13C6 from Homo sapiens (Human).